A 96-amino-acid chain; its full sequence is Cathelin (96 aa).

Gln1 carries the post-translational modification Pyrrolidone carboxylic acid. The tract at residues 31–50 (DQPPKADEDPGTPKPVSFTV) is disordered. Cystine bridges form between Cys55–Cys66 and Cys73–Cys90.

The protein belongs to the cathelicidin family.

It is found in the secreted. In terms of biological role, probably a microbicidal peptide. In Sus scrofa (Pig), this protein is Cathelin.